A 207-amino-acid polypeptide reads, in one-letter code: Large ribosomal subunit protein uL4 (207 aa).

The disordered stretch occupies residues 49-79 (HKVKSRGEVSGGGKKPWRQKGTGRARAGTSR).

It belongs to the universal ribosomal protein uL4 family. In terms of assembly, part of the 50S ribosomal subunit.

In terms of biological role, one of the primary rRNA binding proteins, this protein initially binds near the 5'-end of the 23S rRNA. It is important during the early stages of 50S assembly. It makes multiple contacts with different domains of the 23S rRNA in the assembled 50S subunit and ribosome. Forms part of the polypeptide exit tunnel. The sequence is that of Large ribosomal subunit protein uL4 from Heliobacterium modesticaldum (strain ATCC 51547 / Ice1).